Consider the following 421-residue polypeptide: 4-hydroxy-3-methylbut-2-en-1-yl diphosphate synthase (flavodoxin) (421 aa).

The segment at methionine 1–arginine 20 is disordered. Positions 311, 314, 357, and 364 each coordinate [4Fe-4S] cluster.

Belongs to the IspG family. The cofactor is [4Fe-4S] cluster.

It catalyses the reaction (2E)-4-hydroxy-3-methylbut-2-enyl diphosphate + oxidized [flavodoxin] + H2O + 2 H(+) = 2-C-methyl-D-erythritol 2,4-cyclic diphosphate + reduced [flavodoxin]. The protein operates within isoprenoid biosynthesis; isopentenyl diphosphate biosynthesis via DXP pathway; isopentenyl diphosphate from 1-deoxy-D-xylulose 5-phosphate: step 5/6. Functionally, converts 2C-methyl-D-erythritol 2,4-cyclodiphosphate (ME-2,4cPP) into 1-hydroxy-2-methyl-2-(E)-butenyl 4-diphosphate. The protein is 4-hydroxy-3-methylbut-2-en-1-yl diphosphate synthase (flavodoxin) of Stenotrophomonas maltophilia (strain R551-3).